We begin with the raw amino-acid sequence, 155 residues long: Putative pre-16S rRNA nuclease (155 aa).

It belongs to the YqgF nuclease family.

The protein resides in the cytoplasm. Functionally, could be a nuclease involved in processing of the 5'-end of pre-16S rRNA. This chain is Putative pre-16S rRNA nuclease, found in Xylella fastidiosa (strain M12).